We begin with the raw amino-acid sequence, 382 residues long: Gap junction alpha-1 protein (382 aa).

The Cytoplasmic segment spans residues 2–23 (GDWSALGKLLDKVQAYSTAGGK). A Phosphoserine modification is found at S5. A helical transmembrane segment spans residues 24–44 (VWLSVLFIFRILLLGTAVESA). Residues 45–76 (WGDEQSAFRCNTQQPGCENVCYDKSFPISHVR) lie on the Extracellular side of the membrane. Intrachain disulfides connect C54–C192 and C187–C198. The helical transmembrane segment at 77–97 (FWVLQIIFVSVPTLLYLAHVF) threads the bilayer. The Cytoplasmic portion of the chain corresponds to 98-155 (YVMRKEEKLNKKEEELKVAQTDGANVDMHLKQIEIKKFKYGIEEHGKVKMRGGLLRTY). K144 is covalently cross-linked (Glycyl lysine isopeptide (Lys-Gly) (interchain with G-Cter in SUMO)). The chain crosses the membrane as a helical span at residues 156–176 (IISILFKSVFEVAFLLIQWYI). The Extracellular segment spans residues 177-207 (YGFSLSAVYTCKRDPCPHQVDCFLSRPTEKT). A helical transmembrane segment spans residues 208-228 (IFIIFMLVVSLVSLALNIIEL). The Cytoplasmic portion of the chain corresponds to 229-382 (FYVFFKGIKD…SRPRPDDLEI (154 aa)). A Glycyl lysine isopeptide (Lys-Gly) (interchain with G-Cter in SUMO) cross-link involves residue K237. The interval 244–382 (SDLYHATTGP…SRPRPDDLEI (139 aa)) is interaction with NOV. Position 247 is a phosphotyrosine (Y247). S255, S257, and S262 each carry phosphoserine. The segment at 264–382 (TYAYFNGCSS…SRPRPDDLEI (119 aa)) is interaction with UBQLN4. C271 bears the S-nitrosocysteine mark. T275 carries the phosphothreonine modification. A phosphoserine mark is found at S306 and S314. Polar residues predominate over residues 317 to 332 (QNRMGQAGSTISNSHA). A disordered region spans residues 317–382 (QNRMGQAGST…SRPRPDDLEI (66 aa)). Residue S325 is modified to Phosphoserine; by CK1. At T326 the chain carries Phosphothreonine. 2 positions are modified to phosphoserine; by CK1: S328 and S330. Phosphoserine occurs at positions 344 and 365. Positions 362–374 (RPSSRASSRASSR) are enriched in low complexity. S368 bears the Phosphoserine; by PKC/PRKCG and PKC/PRKCD mark. Phosphoserine occurs at positions 369 and 373.

Belongs to the connexin family. Alpha-type (group II) subfamily. As to quaternary structure, a connexon is composed of a hexamer of connexins. Interacts with SGSM3. Interacts with RIC1/CIP150. Interacts with CNST and CSNK1D. Interacts (via C-terminus) with TJP1. Interacts (via C-terminus) with SRC (via SH3 domain). Interacts (not ubiquitinated) with UBQLN4 (via UBA domain). Interacts with NOV. Interacts with TMEM65. Interacts with ANK3/ANKG and PKP2. Phosphorylation at Ser-325, Ser-328 and Ser-330 by CK1 modulates gap junction assembly. Phosphorylated at Ser-368 by PRKCG; phosphorylation induces disassembly of gap junction plaques and inhibition of gap junction activity. Phosphorylation at Ser-368 by PRKCD triggers its internalization into small vesicles leading to proteasome-mediated degradation. Post-translationally, sumoylated with SUMO1, SUMO2 and SUMO3, which may regulate the level of functional Cx43 gap junctions at the plasma membrane. May be desumoylated by SENP1 or SENP2. In terms of processing, S-nitrosylation at Cys-271 is enriched at the muscle endothelial gap junction in arteries, it augments channel permeability and may regulate of smooth muscle cell to endothelial cell communication. Acetylated in the developing cortex; leading to delocalization from the cell membrane.

It is found in the cell membrane. The protein resides in the cell junction. Its subcellular location is the gap junction. The protein localises to the endoplasmic reticulum. In terms of biological role, gap junction protein that acts as a regulator of bladder capacity. A gap junction consists of a cluster of closely packed pairs of transmembrane channels, the connexons, through which materials of low MW diffuse from one cell to a neighboring cell. May play a critical role in the physiology of hearing by participating in the recycling of potassium to the cochlear endolymph. Negative regulator of bladder functional capacity: acts by enhancing intercellular electrical and chemical transmission, thus sensitizing bladder muscles to cholinergic neural stimuli and causing them to contract. May play a role in cell growth inhibition through the regulation of NOV expression and localization. Plays an essential role in gap junction communication in the ventricles. The sequence is that of Gap junction alpha-1 protein (GJA1) from Erinaceus europaeus (Western European hedgehog).